The following is a 159-amino-acid chain: 3-hydroxyacyl-[acyl-carrier-protein] dehydratase FabZ (159 aa).

The active site involves H62.

Belongs to the thioester dehydratase family. FabZ subfamily.

The protein localises to the cytoplasm. It carries out the reaction a (3R)-hydroxyacyl-[ACP] = a (2E)-enoyl-[ACP] + H2O. In terms of biological role, involved in unsaturated fatty acids biosynthesis. Catalyzes the dehydration of short chain beta-hydroxyacyl-ACPs and long chain saturated and unsaturated beta-hydroxyacyl-ACPs. In Methylobacterium nodulans (strain LMG 21967 / CNCM I-2342 / ORS 2060), this protein is 3-hydroxyacyl-[acyl-carrier-protein] dehydratase FabZ.